The chain runs to 301 residues: Probable alpha-L-glutamate ligase 1 (301 aa).

Positions 104–287 (LQLLSRKGIG…VTEPIVEYIE (184 aa)) constitute an ATP-grasp domain. ATP contacts are provided by residues lysine 141, 178–179 (EY), aspartate 187, and 211–213 (RSN). Aspartate 248, glutamate 260, and asparagine 262 together coordinate Mg(2+). Mn(2+) contacts are provided by aspartate 248, glutamate 260, and asparagine 262.

The protein belongs to the RimK family. Mg(2+) serves as cofactor. Requires Mn(2+) as cofactor.

This chain is Probable alpha-L-glutamate ligase 1, found in Shewanella sp. (strain ANA-3).